The sequence spans 320 residues: D-alanine--D-alanine ligase (320 aa).

One can recognise an ATP-grasp domain in the interval 101-317 (KMIFQGAGLP…FSELVCKILS (217 aa)). Residue 148 to 203 (INQLGLPLIVKPSREGSSFGMTKVEHLDQLDDALKKAWHYDEEILVEKWHFGTELT) coordinates ATP. Residues Asp271, Glu284, and Asn286 each contribute to the Mg(2+) site.

The protein belongs to the D-alanine--D-alanine ligase family. Requires Mg(2+) as cofactor. The cofactor is Mn(2+).

Its subcellular location is the cytoplasm. It catalyses the reaction 2 D-alanine + ATP = D-alanyl-D-alanine + ADP + phosphate + H(+). It functions in the pathway cell wall biogenesis; peptidoglycan biosynthesis. Its function is as follows. Cell wall formation. This Hamiltonella defensa subsp. Acyrthosiphon pisum (strain 5AT) protein is D-alanine--D-alanine ligase.